The chain runs to 260 residues: LOB domain-containing protein 6 (260 aa).

One can recognise an LOB domain in the interval 32 to 133 (SPCAACKFLR…QDLARAKYEL (102 aa)).

This sequence belongs to the LOB domain-containing protein family. Interacts with RS2. In terms of tissue distribution, expressed in leaves, leaf primordia, immature ears, immature tassels, whole ovules, silk and husk leaves. Found on the adaxial side of organs.

It localises to the nucleus. Promotes the switch from proliferation to differentiation in the embryo sac. Negative regulator of cell proliferation in the adaxial side of leaves. Regulates the formation of a symmetric lamina and the establishment of venation. Interacts directly with RS2 (rough sheath 2) to repress some knox homeobox genes. The protein is LOB domain-containing protein 6 (LBD6) of Zea mays (Maize).